Here is a 184-residue protein sequence, read N- to C-terminus: ATP synthase subunit b (184 aa).

Residues 4–24 (LSVLFALVASPALAASGPFFS) form a helical membrane-spanning segment.

It belongs to the ATPase B chain family. F-type ATPases have 2 components, F(1) - the catalytic core - and F(0) - the membrane proton channel. F(1) has five subunits: alpha(3), beta(3), gamma(1), delta(1), epsilon(1). F(0) has three main subunits: a(1), b(2) and c(10-14). The alpha and beta chains form an alternating ring which encloses part of the gamma chain. F(1) is attached to F(0) by a central stalk formed by the gamma and epsilon chains, while a peripheral stalk is formed by the delta and b chains.

It is found in the cell inner membrane. In terms of biological role, f(1)F(0) ATP synthase produces ATP from ADP in the presence of a proton or sodium gradient. F-type ATPases consist of two structural domains, F(1) containing the extramembraneous catalytic core and F(0) containing the membrane proton channel, linked together by a central stalk and a peripheral stalk. During catalysis, ATP synthesis in the catalytic domain of F(1) is coupled via a rotary mechanism of the central stalk subunits to proton translocation. Functionally, component of the F(0) channel, it forms part of the peripheral stalk, linking F(1) to F(0). In Paracoccus denitrificans (strain Pd 1222), this protein is ATP synthase subunit b.